The following is a 411-amino-acid chain: Probable protein S-acyltransferase 2 (411 aa).

A run of 2 helical transmembrane segments spans residues 56–76 and 85–105; these read LTTA…VFLI and SLIL…LFLT. Residues 160–210 enclose the DHHC domain; sequence KFCDTCLLYRPPRASHCSICNNCVQRFDHHCPWVGQCIALRNYPYFICFIS. The active-site S-palmitoyl cysteine intermediate is Cys-190. 2 helical membrane-spanning segments follow: residues 205 to 225 and 245 to 265; these read FICF…FSWV and FVVL…LTVF. Phosphoserine is present on Ser-405.

The protein belongs to the DHHC palmitoyltransferase family. As to expression, expressed in flowers and pollen.

It localises to the cytoplasmic vesicle membrane. It catalyses the reaction L-cysteinyl-[protein] + hexadecanoyl-CoA = S-hexadecanoyl-L-cysteinyl-[protein] + CoA. Palmitoyl acyltransferase. The sequence is that of Probable protein S-acyltransferase 2 (PAT02) from Arabidopsis thaliana (Mouse-ear cress).